We begin with the raw amino-acid sequence, 64 residues long: Small ribosomal subunit protein bS21 (64 aa).

Belongs to the bacterial ribosomal protein bS21 family.

The chain is Small ribosomal subunit protein bS21 from Flavobacterium johnsoniae (strain ATCC 17061 / DSM 2064 / JCM 8514 / BCRC 14874 / CCUG 350202 / NBRC 14942 / NCIMB 11054 / UW101) (Cytophaga johnsonae).